The primary structure comprises 273 residues: Testis-specific serine/threonine-protein kinase 6 (273 aa).

The region spanning 12–267 (YKLGRTIGEG…AGQVARNGWL (256 aa)) is the Protein kinase domain. ATP-binding positions include 18 to 26 (IGEGSYSKV) and lysine 41. Aspartate 135 functions as the Proton acceptor in the catalytic mechanism.

The protein belongs to the protein kinase superfamily. CAMK Ser/Thr protein kinase family. As to quaternary structure, microtubule inner protein component of sperm flagellar doublet microtubules. Interacts with HSP90; this interaction stabilizes and activates TSSK6. Interacts with the heat shock proteins HSPCB, HSPA8 and HSPA1A. These interactions appear to be required for TSSK6 kinase activity. Interacts with TSACC; this interaction is direct and recruits TSACC to HSP90, which is essential for kinase activity. Mg(2+) serves as cofactor. In terms of processing, autophosphorylated. Post-translationally, ubiquitinated; HSP90 activity negatively regulates ubiquitination and degradation. As to expression, expressed in the testis, localized to the heads of elongating spermatids.

Its subcellular location is the cytoplasm. It localises to the cytoskeleton. It is found in the flagellum axoneme. The protein resides in the nucleus. The catalysed reaction is L-seryl-[protein] + ATP = O-phospho-L-seryl-[protein] + ADP + H(+). It catalyses the reaction L-threonyl-[protein] + ATP = O-phospho-L-threonyl-[protein] + ADP + H(+). Its function is as follows. Serine/threonine-protein kinase component of the sperm flagellar doublet microtubules. May act as a regulator of sperm motility by mediating phosphorylation of sperm doublet microtubule proteins. Plays a role in DNA condensation during postmeiotic chromatin remodeling and histone-to-protamine transition during spermatogenesis. The polypeptide is Testis-specific serine/threonine-protein kinase 6 (Mus musculus (Mouse)).